We begin with the raw amino-acid sequence, 391 residues long: Ferrochelatase (391 aa).

His-196 and Glu-281 together coordinate Fe cation.

This sequence belongs to the ferrochelatase family.

The protein resides in the cytoplasm. It carries out the reaction heme b + 2 H(+) = protoporphyrin IX + Fe(2+). The protein operates within porphyrin-containing compound metabolism; protoheme biosynthesis; protoheme from protoporphyrin-IX: step 1/1. Catalyzes the ferrous insertion into protoporphyrin IX. The chain is Ferrochelatase from Synechococcus sp. (strain WH7803).